The sequence spans 411 residues: Putative binding protein BRA0748/BS1330_II0741 (411 aa).

The N-terminal stretch at 1–25 is a signal peptide; that stretch reads MLIRKWKAGLLAGLSILALASSADA.

The protein belongs to the bacterial solute-binding protein 1 family. In terms of assembly, the complex is composed of two ATP-binding proteins (BRA0745), two transmembrane proteins (BRA0749) and a solute-binding protein (BRA0748).

It is found in the periplasm. In terms of biological role, probably part of an ABC transporter complex. This is Putative binding protein BRA0748/BS1330_II0741 from Brucella suis biovar 1 (strain 1330).